A 326-amino-acid polypeptide reads, in one-letter code: MKNIAIIGASGYTGAQLTALIHAEAELTIQGLYVSENSLDKGKPLADLYPSYSHIALTLSPLSEDAKAKIVAEADAVVLATEHSVSLHLAAWFYSQGLAVFDLSGAYRFSDVAQYPKWYGFEHEYPEVLAKAVYGLAEWNAKEIAATKMIAVPGCYPTASLTALKPLASLLTSAYPVINAVSGVTGAGRKAQLHTSFCEVSLTPYGVLGHRHQPEIATQLGQEVIFTPHLGNFKRGILATITVQLKPGTTTADVAAAYSVYDQAPLVTVKHNQFPKVDDVVLTPNCHLGWKFDENSGYLVVASAIDNLMKGAASQALQCIKIHFNL.

Residue C155 is part of the active site.

This sequence belongs to the NAGSA dehydrogenase family. Type 1 subfamily.

It localises to the cytoplasm. The catalysed reaction is N-acetyl-L-glutamate 5-semialdehyde + phosphate + NADP(+) = N-acetyl-L-glutamyl 5-phosphate + NADPH + H(+). Its pathway is amino-acid biosynthesis; L-arginine biosynthesis; N(2)-acetyl-L-ornithine from L-glutamate: step 3/4. Its function is as follows. Catalyzes the NADPH-dependent reduction of N-acetyl-5-glutamyl phosphate to yield N-acetyl-L-glutamate 5-semialdehyde. The polypeptide is N-acetyl-gamma-glutamyl-phosphate reductase (Shewanella baltica (strain OS155 / ATCC BAA-1091)).